Reading from the N-terminus, the 966-residue chain is Alanine--tRNA ligase (966 aa).

Residues histidine 646, histidine 650, cysteine 750, and histidine 754 each coordinate Zn(2+). The segment at 927-949 is disordered; it reads DRLGGGGGGRPSLASAGGRDPEA.

The protein belongs to the class-II aminoacyl-tRNA synthetase family. Zn(2+) is required as a cofactor.

The protein resides in the cytoplasm. It catalyses the reaction tRNA(Ala) + L-alanine + ATP = L-alanyl-tRNA(Ala) + AMP + diphosphate. Catalyzes the attachment of alanine to tRNA(Ala) in a two-step reaction: alanine is first activated by ATP to form Ala-AMP and then transferred to the acceptor end of tRNA(Ala). Also edits incorrectly charged Ser-tRNA(Ala) and Gly-tRNA(Ala) via its editing domain. The polypeptide is Alanine--tRNA ligase (Salinibacter ruber (strain DSM 13855 / M31)).